A 224-amino-acid polypeptide reads, in one-letter code: 7-cyano-7-deazaguanine synthase (224 aa).

9–19 (LSGGLDSATAL) lines the ATP pocket. Cys-188, Cys-198, Cys-201, and Cys-204 together coordinate Zn(2+).

Belongs to the QueC family. Zn(2+) serves as cofactor.

The enzyme catalyses 7-carboxy-7-deazaguanine + NH4(+) + ATP = 7-cyano-7-deazaguanine + ADP + phosphate + H2O + H(+). It participates in purine metabolism; 7-cyano-7-deazaguanine biosynthesis. Functionally, catalyzes the ATP-dependent conversion of 7-carboxy-7-deazaguanine (CDG) to 7-cyano-7-deazaguanine (preQ(0)). The chain is 7-cyano-7-deazaguanine synthase from Thiobacillus denitrificans (strain ATCC 25259 / T1).